A 161-amino-acid polypeptide reads, in one-letter code: Cytochrome b6-f complex subunit 4 (161 aa).

3 helical membrane-spanning segments follow: residues 37–57, 96–116, and 132–152; these read LLYI…GLAV, LLGV…PFIE, and SVFL…TLPI.

This sequence belongs to the cytochrome b family. PetD subfamily. In terms of assembly, the 4 large subunits of the cytochrome b6-f complex are cytochrome b6, subunit IV (17 kDa polypeptide, PetD), cytochrome f and the Rieske protein, while the 4 small subunits are PetG, PetL, PetM and PetN. The complex functions as a dimer.

Its subcellular location is the cellular thylakoid membrane. Functionally, component of the cytochrome b6-f complex, which mediates electron transfer between photosystem II (PSII) and photosystem I (PSI), cyclic electron flow around PSI, and state transitions. This is Cytochrome b6-f complex subunit 4 from Acaryochloris marina (strain MBIC 11017).